The following is a 583-amino-acid chain: Aspartate--tRNA ligase (583 aa).

An L-aspartate-binding site is contributed by Glu-174. Residues 198-201 (QTFK) form an aspartate region. L-aspartate is bound at residue Arg-220. Residues 220–222 (RDE) and Gln-229 each bind ATP. His-445 lines the L-aspartate pocket. Position 479 (Glu-479) interacts with ATP. Arg-486 is an L-aspartate binding site. Residue 531-534 (GLDR) coordinates ATP.

Belongs to the class-II aminoacyl-tRNA synthetase family. Type 1 subfamily. As to quaternary structure, homodimer.

It is found in the cytoplasm. It carries out the reaction tRNA(Asp) + L-aspartate + ATP = L-aspartyl-tRNA(Asp) + AMP + diphosphate. Catalyzes the attachment of L-aspartate to tRNA(Asp) in a two-step reaction: L-aspartate is first activated by ATP to form Asp-AMP and then transferred to the acceptor end of tRNA(Asp). The protein is Aspartate--tRNA ligase of Flavobacterium psychrophilum (strain ATCC 49511 / DSM 21280 / CIP 103535 / JIP02/86).